The primary structure comprises 470 residues: Serine/threonine-protein kinase PEPKR2 (470 aa).

Residues 107 to 355 form the Protein kinase domain; sequence YVFGRNIGKG…ADEVLRHPWI (249 aa). ATP is bound by residues 113 to 121 and K136; that span reads IGKGKFGSV. D224 serves as the catalytic Proton acceptor. A compositionally biased stretch (polar residues) spans 377 to 386; sequence GSSTCLQNRS. Disordered stretches follow at residues 377-419 and 441-464; these read GSST…EEED and RSRVCSPTNNPIEQQHSSNLTSTS. Positions 387 to 403 are enriched in basic and acidic residues; the sequence is PTEKTDLNRADREKKIP. Positions 445–464 are enriched in polar residues; the sequence is CSPTNNPIEQQHSSNLTSTS.

The protein belongs to the protein kinase superfamily. Ser/Thr protein kinase family.

The catalysed reaction is L-seryl-[protein] + ATP = O-phospho-L-seryl-[protein] + ADP + H(+). It carries out the reaction L-threonyl-[protein] + ATP = O-phospho-L-threonyl-[protein] + ADP + H(+). The chain is Serine/threonine-protein kinase PEPKR2 (PEPKR2) from Arabidopsis thaliana (Mouse-ear cress).